Reading from the N-terminus, the 215-residue chain is Fibrillarin-like rRNA/tRNA 2'-O-methyltransferase (215 aa).

A disordered region spans residues 1-29 (MKASSSLPDGVQRRQFDNRSRLTTHGTTV). Over residues 11–20 (VQRRQFDNRS) the composition is skewed to basic and acidic residues. S-adenosyl-L-methionine is bound by residues 76–77 (TT), 92–93 (EF), 117–118 (DA), and 138–141 (DVAT).

The protein belongs to the methyltransferase superfamily. Fibrillarin family. As to quaternary structure, interacts with nop5. Component of box C/D small ribonucleoprotein (sRNP) particles that contain rpl7ae, FlpA and nop5, plus a guide RNA.

In terms of biological role, involved in pre-rRNA and tRNA processing. Utilizes the methyl donor S-adenosyl-L-methionine to catalyze the site-specific 2'-hydroxyl methylation of ribose moieties in rRNA and tRNA. Site specificity is provided by a guide RNA that base pairs with the substrate. Methylation occurs at a characteristic distance from the sequence involved in base pairing with the guide RNA. This chain is Fibrillarin-like rRNA/tRNA 2'-O-methyltransferase, found in Haloquadratum walsbyi (strain DSM 16790 / HBSQ001).